Consider the following 185-residue polypeptide: Large ribosomal subunit protein uL22 (185 aa).

This sequence belongs to the universal ribosomal protein uL22 family. Part of the 50S ribosomal subunit.

This protein binds specifically to 23S rRNA. It makes multiple contacts with different domains of the 23S rRNA in the assembled 50S subunit and ribosome. Functionally, the globular domain of the protein is located near the polypeptide exit tunnel on the outside of the subunit, while an extended beta-hairpin is found that lines the wall of the exit tunnel in the center of the 70S ribosome. The polypeptide is Large ribosomal subunit protein uL22 (Pyrobaculum islandicum (strain DSM 4184 / JCM 9189 / GEO3)).